The primary structure comprises 171 residues: MAAITSATVTIPSFTGLKLAVSSKPKTLSTISRSTSATRAPPKLALKSSLKDFGVIAVATAASIVLAGNAMAMEVLLGSDDGSLAFVPSEFTVAKGEKIVFKNNAGFPHNVVFDEDEIPSGVDASKISMDETALLNGAGETYEVTLTEPGSYGFYCAPHQGAGMVGKLTVK.

The Plastocyanin-like domain maps to 73 to 171 (MEVLLGSDDG…AGMVGKLTVK (99 aa)). 4 residues coordinate Cu cation: histidine 109, cysteine 156, histidine 159, and methionine 164.

Belongs to the plastocyanin family. Cu(2+) is required as a cofactor.

Its subcellular location is the plastid. It is found in the chloroplast thylakoid membrane. Participates in electron transfer between P700 and the cytochrome b6-f complex in photosystem I. Seems to be a minor plastocyanin in Arabidopsis. This is Plastocyanin minor isoform, chloroplastic (PETE) from Arabidopsis thaliana (Mouse-ear cress).